The primary structure comprises 539 residues: Phosphoenolpyruvate carboxykinase (ATP) (539 aa).

Arginine 64, tyrosine 206, and lysine 212 together coordinate substrate. ATP contacts are provided by residues lysine 212, histidine 231, and 247-255 (GLSGTGKTT). Lysine 212 and histidine 231 together coordinate Mn(2+). Aspartate 268 serves as a coordination point for Mn(2+). ATP-binding positions include glutamate 296, arginine 332, 448–449 (RI), and threonine 454. Arginine 332 contributes to the substrate binding site.

Belongs to the phosphoenolpyruvate carboxykinase (ATP) family. Monomer. The cofactor is Mn(2+).

It localises to the cytoplasm. It carries out the reaction oxaloacetate + ATP = phosphoenolpyruvate + ADP + CO2. The protein operates within carbohydrate biosynthesis; gluconeogenesis. Functionally, involved in the gluconeogenesis. Catalyzes the conversion of oxaloacetate (OAA) to phosphoenolpyruvate (PEP) through direct phosphoryl transfer between the nucleoside triphosphate and OAA. The polypeptide is Phosphoenolpyruvate carboxykinase (ATP) (Salmonella gallinarum (strain 287/91 / NCTC 13346)).